The chain runs to 445 residues: Phosphoglucosamine mutase (445 aa).

Catalysis depends on S102, which acts as the Phosphoserine intermediate. Mg(2+)-binding residues include S102, D241, D243, and D245. Residue S102 is modified to Phosphoserine.

It belongs to the phosphohexose mutase family. Mg(2+) is required as a cofactor. In terms of processing, activated by phosphorylation.

It carries out the reaction alpha-D-glucosamine 1-phosphate = D-glucosamine 6-phosphate. Catalyzes the conversion of glucosamine-6-phosphate to glucosamine-1-phosphate. The sequence is that of Phosphoglucosamine mutase from Acinetobacter baumannii (strain ACICU).